Reading from the N-terminus, the 476-residue chain is Cysteine--tRNA ligase (476 aa).

Cys-31 contributes to the Zn(2+) binding site. The 'HIGH' region signature appears at 33 to 43 (PTVYNYAHIGN). Cys-211, His-236, and Glu-240 together coordinate Zn(2+). Residues 269 to 273 (KMSKS) carry the 'KMSKS' region motif. Residue Lys-272 coordinates ATP.

The protein belongs to the class-I aminoacyl-tRNA synthetase family. Monomer. Requires Zn(2+) as cofactor.

It localises to the cytoplasm. It catalyses the reaction tRNA(Cys) + L-cysteine + ATP = L-cysteinyl-tRNA(Cys) + AMP + diphosphate. This chain is Cysteine--tRNA ligase, found in Xanthomonas oryzae pv. oryzae (strain MAFF 311018).